The sequence spans 244 residues: ATP synthase subunit b 2 (244 aa).

Residues Thr2–Leu22 form a helical membrane-spanning segment.

Belongs to the ATPase B chain family. As to quaternary structure, F-type ATPases have 2 components, F(1) - the catalytic core - and F(0) - the membrane proton channel. F(1) has five subunits: alpha(3), beta(3), gamma(1), delta(1), epsilon(1). F(0) has three main subunits: a(1), b(2) and c(10-14). The alpha and beta chains form an alternating ring which encloses part of the gamma chain. F(1) is attached to F(0) by a central stalk formed by the gamma and epsilon chains, while a peripheral stalk is formed by the delta and b chains.

It is found in the cell inner membrane. Functionally, f(1)F(0) ATP synthase produces ATP from ADP in the presence of a proton or sodium gradient. F-type ATPases consist of two structural domains, F(1) containing the extramembraneous catalytic core and F(0) containing the membrane proton channel, linked together by a central stalk and a peripheral stalk. During catalysis, ATP synthesis in the catalytic domain of F(1) is coupled via a rotary mechanism of the central stalk subunits to proton translocation. Its function is as follows. Component of the F(0) channel, it forms part of the peripheral stalk, linking F(1) to F(0). The protein is ATP synthase subunit b 2 of Gluconobacter oxydans (strain 621H) (Gluconobacter suboxydans).